The following is a 386-amino-acid chain: Trichocyst matrix protein T2-B (386 aa).

The N-terminal stretch at 1-19 (MKTIILALALIALVSSTQS) is a signal peptide. The propeptide occupies 20-48 (DVIDTIKKIDQSPFGRTLFDTIWLELQTG). A coiled-coil region spans residues 51 to 154 (LDRLVSTLTD…AEEHEDFEEK (104 aa)). The propeptide occupies 184–238 (KGKAAKQPHKFTKDVANLIQKHFTTSAKKTAKFQHRKGYSKLFKAFATIASKVEQ). The stretch at 294 to 325 (ALANAISDLAALNDIIAQVEASLDTTVQRIEN) forms a coiled coil.

It belongs to the TMP family.

It localises to the trichocyst. Structural protein that crystallize inside the trichocyst matrix. This is Trichocyst matrix protein T2-B (T2B) from Paramecium tetraurelia.